Consider the following 264-residue polypeptide: ORC1-type DNA replication protein 2 (264 aa).

Residues 73–77, tyrosine 220, and arginine 232 each bind ATP; that span reads TGKSL.

Belongs to the CDC6/cdc18 family.

Functionally, involved in regulation of DNA replication. The polypeptide is ORC1-type DNA replication protein 2 (orc2) (Halobacterium salinarum (strain ATCC 700922 / JCM 11081 / NRC-1) (Halobacterium halobium)).